The following is a 349-amino-acid chain: tRNA uridine(34) hydroxylase (349 aa).

Positions 146 to 240 (DDPDAVFIDM…YARKAREQGL (95 aa)) constitute a Rhodanese domain. The active-site Cysteine persulfide intermediate is Cys-200. The span at 314–328 (PEEEQRRRRAGRENG) shows a compositional bias: basic and acidic residues. The disordered stretch occupies residues 314-349 (PEEEQRRRRAGRENGNKIFNKSRGRLNTTLGIPDPE).

This sequence belongs to the TrhO family.

It carries out the reaction uridine(34) in tRNA + AH2 + O2 = 5-hydroxyuridine(34) in tRNA + A + H2O. Functionally, catalyzes oxygen-dependent 5-hydroxyuridine (ho5U) modification at position 34 in tRNAs. The polypeptide is tRNA uridine(34) hydroxylase (Cronobacter sakazakii (strain ATCC BAA-894) (Enterobacter sakazakii)).